The following is a 227-amino-acid chain: Uracil-DNA glycosylase (227 aa).

Residue Asp-68 is the Proton acceptor of the active site.

It belongs to the uracil-DNA glycosylase (UDG) superfamily. UNG family.

The protein resides in the cytoplasm. The enzyme catalyses Hydrolyzes single-stranded DNA or mismatched double-stranded DNA and polynucleotides, releasing free uracil.. Functionally, excises uracil residues from the DNA which can arise as a result of misincorporation of dUMP residues by DNA polymerase or due to deamination of cytosine. The polypeptide is Uracil-DNA glycosylase (Mycolicibacterium paratuberculosis (strain ATCC BAA-968 / K-10) (Mycobacterium paratuberculosis)).